The chain runs to 429 residues: Arginine biosynthesis bifunctional protein ArgJ (429 aa).

Substrate is bound by residues T181, K207, T218, E302, N424, and S429. The active-site Nucleophile is T218.

The protein belongs to the ArgJ family. Heterotetramer of two alpha and two beta chains.

The protein localises to the cytoplasm. The enzyme catalyses N(2)-acetyl-L-ornithine + L-glutamate = N-acetyl-L-glutamate + L-ornithine. It catalyses the reaction L-glutamate + acetyl-CoA = N-acetyl-L-glutamate + CoA + H(+). Its pathway is amino-acid biosynthesis; L-arginine biosynthesis; L-ornithine and N-acetyl-L-glutamate from L-glutamate and N(2)-acetyl-L-ornithine (cyclic): step 1/1. The protein operates within amino-acid biosynthesis; L-arginine biosynthesis; N(2)-acetyl-L-ornithine from L-glutamate: step 1/4. Functionally, catalyzes two activities which are involved in the cyclic version of arginine biosynthesis: the synthesis of N-acetylglutamate from glutamate and acetyl-CoA as the acetyl donor, and of ornithine by transacetylation between N(2)-acetylornithine and glutamate. The protein is Arginine biosynthesis bifunctional protein ArgJ of Chlorobium chlorochromatii (strain CaD3).